A 364-amino-acid polypeptide reads, in one-letter code: MAGESTQVDLSVKAIGWGAKDASGILHPIKFSRRTPGERDVKIRVLYCGVCNFDMEMVRNKWGFTRYPYVFGHETAGEVVEVGSKVQKFKVGDKVAVGCMVGSCGKCYNCENGMENYCPEPNMADGSVYREQGERSYGGCSNVMVVDEKFVLRWPENLPQDTGVPLLCAGVVVYSPMKYMGLDKPGKHIGVFGLGGLGSVAVKFIKAFGGKATVISTSRRKEKEAIEEHGADAFVVNSDTEQLQALAGTMDGVVDTTPGGRTPMSLMLNLLKFDGSLILVGAPETLFELPVQPLILGRRKIIGSSTGGLKEYQEMLDFAAKHNILCDTEVIGIDYLSTAMERIKNLDVKYRFAIDIGNTLKYEE.

The Enoyl reductase (ER) domain maps to 24–343 (GILHPIKFSR…DYLSTAMERI (320 aa)). A Zn(2+)-binding site is contributed by Cys-51. Residue Asn-52 coordinates NADP(+). Residues His-73, Glu-74, Cys-104, Cys-107, Cys-110, Cys-118, and Cys-168 each contribute to the Zn(2+) site. Positions 194, 196, 197, 216, 217, 218, 221, 261, 280, 282, 304, 306, and 351 each coordinate NADP(+).

The protein belongs to the zinc-containing alcohol dehydrogenase family. Class-III subfamily. As to quaternary structure, homodimer. The cofactor is Zn(2+).

It carries out the reaction (19E)-geissoschizine + NADP(+) = 4,21-dehydrogeissoschizine + NADPH. The enzyme catalyses (19E)-geissoschizine + NADPH + H(+) = (16R,19E)-isositsirikine + NADP(+). The catalysed reaction is (19E)-geissoschizine + NADPH + H(+) = (16R,19Z)-isositsirikine + NADP(+). The protein operates within alkaloid biosynthesis. In terms of biological role, an alcohol dehydrogenase involved in the biosynthesis of seco-iridoid and derivatives monoterpenoid indole alkaloids natural products. Catalyzes the production of geissoschizine and its conversion to (16R)-E-isositsirikine and (16R)-Z-isositsirikine. The polypeptide is Geissoschizine synthase (Alstonia scholaris (Dogbane)).